The following is a 406-amino-acid chain: Glycosylated lysosomal membrane protein (406 aa).

The signal sequence occupies residues 1-35 (MRGSVECTWGWGHCAPSPLLLWTLLLFAAPFGLLG). At 36–372 (EKTRQVSLEV…VDGLSPLVLG (337 aa)) the chain is on the lumenal side. N-linked (GlcNAc...) asparagine glycans are attached at residues Asn65, Asn134, Asn159, Asn187, and Asn230. A helical transmembrane segment spans residues 373 to 393 (IMAVALGAPGLMLLGGGLVLL). Residues 394-406 (LHHKKYSEYQSIN) lie on the Cytoplasmic side of the membrane. The Lysosomal targeting motif motif lies at 402 to 406 (YQSIN).

It belongs to the GLMP family. In terms of assembly, interacts (via lumenal domain) with lysosomal protein MFSD1; the interaction starts while both proteins are still in the endoplasmic reticulum and is required for stabilization of MFSD1 in lysosomes but has no direct effect on its targeting to lysosomes or transporter activity. Post-translationally, highly N-glycosylated. N-glycosylation is essential for GLMP stability and for MFSD1 lysosomal localization.

The protein localises to the lysosome membrane. Required to protect lysosomal transporter MFSD1 from lysosomal proteolysis and for MFSD1 lysosomal localization. This Homo sapiens (Human) protein is Glycosylated lysosomal membrane protein.